The primary structure comprises 477 residues: Leukotoxin export protein LtxD (477 aa).

Residues 64–84 (IMLFLTLAIIVSIFSNVEIIA) form a helical membrane-spanning segment. Residues 206–287 (LNLNKKEAEK…ENEVLLAKEE (82 aa)) adopt a coiled-coil conformation.

It belongs to the membrane fusion protein (MFP) (TC 8.A.1) family. Probably part of a complex composed of LtxB, LtxD and TdeA, which forms a single transport channel across the two membranes.

It is found in the cell inner membrane. Its function is as follows. Involved in the export of the LtxA leukotoxin. The chain is Leukotoxin export protein LtxD from Aggregatibacter actinomycetemcomitans (Actinobacillus actinomycetemcomitans).